We begin with the raw amino-acid sequence, 161 residues long: uncharacterized protein (161 aa).

A compositionally biased stretch (polar residues) spans 1–10; that stretch reads MSKQQEQDTP. 3 disordered regions span residues 1–20, 55–84, and 118–161; these read MSKQQEQDTPSFGEIRQRLQ, KKTREEQIAEDEHAASLRRLGHAERSMSDE, and LLQQ…ANNS. Residues 82 to 107 adopt a coiled-coil conformation; it reads SDEEYARQLQEEMDRLDASIQMDKEA. The segment covering 144-161 has biased composition (low complexity); that stretch reads QQSSNTTTSSSCQSANNS.

This is an uncharacterized protein from Caenorhabditis elegans.